The chain runs to 156 residues: Baculoviral IAP repeat-containing protein 5.2 (156 aa).

The stretch at 30–100 is one BIR repeat; sequence RLSTFANWPF…KHSPSCLFIA (71 aa). At T46 the chain carries Phosphothreonine; by CDK1. Residues C69, C72, H89, and C96 each coordinate Zn(2+).

This sequence belongs to the IAP family. Component of the CPC at least composed of survivin/birc5, incenp, cdca8/borealin and/or cdca9/dasra-A, and aurkb/aurora-B. Interacts directly with incenp (via N-terminus). Interacts with rxra; the interaction is stronger in the absence of 9-cis retinoic acids. Post-translationally, ubiquitination is required for centrosome-targeting.

It localises to the cytoplasm. The protein localises to the nucleus. It is found in the chromosome. Its subcellular location is the centromere. The protein resides in the cytoskeleton. It localises to the spindle. Its function is as follows. Component of the chromosomal passenger complex (CPC), a complex that acts as a key regulator of mitosis. The CPC complex has essential functions at the centromere in ensuring correct chromosome alignment and segregation and is required for chromatin-induced microtubule stabilization and spindle assembly. Does not appear to exhibit anti-apoptotic activity. Plays a role in increasing blood vessel size during development. In Xenopus tropicalis (Western clawed frog), this protein is Baculoviral IAP repeat-containing protein 5.2 (birc5.2).